The following is a 228-amino-acid chain: FCS-Like Zinc finger 12 (228 aa).

The segment at 162–205 (DFLTSCCLCKKKLQGKDIYMYKGDEGFCSKECRSLKIMEDSLKE) adopts an FLZ-type zinc-finger fold.

The protein belongs to the FLZ family. Interacts with KIN10 and KIN11 via its FLZ-type zinc finger domain. Interacts with KINB1 and KINB2 via its N-terminal part. Forms homodimer and heterodimer with FLZ2 and FLZ10 in vitro.

Functionally, may act as an adapter to facilitate the interaction of SnRK1 complex with effector proteins, conferring tissue- and stimulus-type specific differences in the SnRK1 regulation pathway. The sequence is that of FCS-Like Zinc finger 12 from Arabidopsis thaliana (Mouse-ear cress).